Reading from the N-terminus, the 367-residue chain is Queuine tRNA-ribosyltransferase (367 aa).

Catalysis depends on aspartate 92, which acts as the Proton acceptor. Substrate is bound by residues 92 to 96, aspartate 146, glutamine 188, and glycine 215; that span reads DSGGF. Positions 246–252 are RNA binding; it reads GVGTPKD. Aspartate 265 serves as the catalytic Nucleophile. Residues cysteine 303, cysteine 305, cysteine 308, and histidine 334 each coordinate Zn(2+).

It belongs to the queuine tRNA-ribosyltransferase family. As to quaternary structure, homodimer. Within each dimer, one monomer is responsible for RNA recognition and catalysis, while the other monomer binds to the replacement base PreQ1. Zn(2+) is required as a cofactor.

It catalyses the reaction 7-aminomethyl-7-carbaguanine + guanosine(34) in tRNA = 7-aminomethyl-7-carbaguanosine(34) in tRNA + guanine. Its pathway is tRNA modification; tRNA-queuosine biosynthesis. Its function is as follows. Catalyzes the base-exchange of a guanine (G) residue with the queuine precursor 7-aminomethyl-7-deazaguanine (PreQ1) at position 34 (anticodon wobble position) in tRNAs with GU(N) anticodons (tRNA-Asp, -Asn, -His and -Tyr). Catalysis occurs through a double-displacement mechanism. The nucleophile active site attacks the C1' of nucleotide 34 to detach the guanine base from the RNA, forming a covalent enzyme-RNA intermediate. The proton acceptor active site deprotonates the incoming PreQ1, allowing a nucleophilic attack on the C1' of the ribose to form the product. After dissociation, two additional enzymatic reactions on the tRNA convert PreQ1 to queuine (Q), resulting in the hypermodified nucleoside queuosine (7-(((4,5-cis-dihydroxy-2-cyclopenten-1-yl)amino)methyl)-7-deazaguanosine). This Francisella tularensis subsp. novicida (strain U112) protein is Queuine tRNA-ribosyltransferase.